The sequence spans 117 residues: MHEMSIAMSIVDAVDAKARAEGAVRISLIELKIGKLAGILPEALRFCFSAAATGSLAGQAQLVIDEPDGRGRCSDCGHEFSVDFYYARCPECGSLRIVIVSGEEFLIQSIIIDEEGE.

Histidine 2 lines the Ni(2+) pocket. Residues cysteine 73, cysteine 76, cysteine 89, and cysteine 92 each coordinate Zn(2+).

The protein belongs to the HypA/HybF family.

Functionally, involved in the maturation of [NiFe] hydrogenases. Required for nickel insertion into the metal center of the hydrogenase. The polypeptide is Hydrogenase maturation factor HypA (Chlorobium luteolum (strain DSM 273 / BCRC 81028 / 2530) (Pelodictyon luteolum)).